A 264-amino-acid chain; its full sequence is Virulence plasmid protein pGP3-D (264 aa).

In Chlamydia muridarum (strain MoPn / Nigg), this protein is Virulence plasmid protein pGP3-D.